The sequence spans 216 residues: DDB1- and CUL4-associated factor 16 (216 aa).

The interval 1 to 42 (MGPRNPSPDHLSESESEEEENISYLNESSGEEWDSSEEEDSM) is disordered. The span at 29 to 41 (SGEEWDSSEEEDS) shows a compositional bias: acidic residues. Lys-61 carries the N6-acetyllysine modification.

In terms of assembly, interacts with DDB1 and CUL4A.

The protein resides in the nucleus. It functions in the pathway protein modification; protein ubiquitination. In terms of biological role, functions as a substrate recognition component for CUL4-DDB1 E3 ubiquitin-protein ligase complex, which mediates ubiquitination and proteasome-dependent degradation of nuclear proteins. In Homo sapiens (Human), this protein is DDB1- and CUL4-associated factor 16.